The primary structure comprises 475 residues: Ribulose bisphosphate carboxylase large chain (475 aa).

A propeptide spanning residues 1–2 is cleaved from the precursor; that stretch reads MS. Pro3 is modified (N-acetylproline). Lys14 is modified (N6,N6,N6-trimethyllysine). Substrate-binding residues include Asn123 and Thr173. Lys175 acts as the Proton acceptor in catalysis. Lys177 contributes to the substrate binding site. Mg(2+)-binding residues include Lys201, Asp203, and Glu204. At Lys201 the chain carries N6-carboxylysine. His294 serves as the catalytic Proton acceptor. Residues Arg295, His327, and Ser379 each coordinate substrate.

The protein belongs to the RuBisCO large chain family. Type I subfamily. Heterohexadecamer of 8 large chains and 8 small chains. Requires Mg(2+) as cofactor.

The protein resides in the plastid. It localises to the chloroplast. The enzyme catalyses 2 (2R)-3-phosphoglycerate + 2 H(+) = D-ribulose 1,5-bisphosphate + CO2 + H2O. It carries out the reaction D-ribulose 1,5-bisphosphate + O2 = 2-phosphoglycolate + (2R)-3-phosphoglycerate + 2 H(+). In terms of biological role, ruBisCO catalyzes two reactions: the carboxylation of D-ribulose 1,5-bisphosphate, the primary event in carbon dioxide fixation, as well as the oxidative fragmentation of the pentose substrate in the photorespiration process. Both reactions occur simultaneously and in competition at the same active site. The protein is Ribulose bisphosphate carboxylase large chain of Chlorella vulgaris (Green alga).